The following is an 87-amino-acid chain: Small ribosomal subunit protein bS21 (87 aa).

The span at 35 to 52 shows a compositional bias: basic and acidic residues; that stretch reads HYEKPSEKKAREKAEAVR. The tract at residues 35–87 is disordered; sequence HYEKPSEKKAREKAEAVRRARKLARKKLQREGLLPSKPKPAFGADRRPSAAAR. Over residues 53–62 the composition is skewed to basic residues; that stretch reads RARKLARKKL. Positions 78 to 87 are enriched in basic and acidic residues; the sequence is ADRRPSAAAR.

This is Small ribosomal subunit protein bS21 from Rhodopseudomonas palustris (strain ATCC BAA-98 / CGA009).